The following is a 253-amino-acid chain: Methionine aminopeptidase (253 aa).

Histidine 78 is a substrate binding site. The a divalent metal cation site is built by aspartate 95, aspartate 106, and histidine 169. Histidine 176 contributes to the substrate binding site. A divalent metal cation contacts are provided by glutamate 206 and glutamate 237.

It belongs to the peptidase M24A family. Methionine aminopeptidase type 1 subfamily. In terms of assembly, monomer. The cofactor is Co(2+). Requires Zn(2+) as cofactor. Mn(2+) serves as cofactor. It depends on Fe(2+) as a cofactor.

It carries out the reaction Release of N-terminal amino acids, preferentially methionine, from peptides and arylamides.. In terms of biological role, removes the N-terminal methionine from nascent proteins. The N-terminal methionine is often cleaved when the second residue in the primary sequence is small and uncharged (Met-Ala-, Cys, Gly, Pro, Ser, Thr, or Val). Requires deformylation of the N(alpha)-formylated initiator methionine before it can be hydrolyzed. The chain is Methionine aminopeptidase from Helicobacter pylori (strain J99 / ATCC 700824) (Campylobacter pylori J99).